We begin with the raw amino-acid sequence, 168 residues long: Thermonuclease (168 aa).

Positions 1-27 (MKKITTGVLILAIAIVVLIFQYINGDG) are cleaved as a signal peptide. Active-site residues include R64, E72, and R114.

The protein belongs to the thermonuclease family. Requires Ca(2+) as cofactor.

The protein localises to the secreted. The catalysed reaction is Endonucleolytic cleavage to nucleoside 3'-phosphates and 3'-phosphooligonucleotide end-products.. Its function is as follows. Enzyme that catalyzes the hydrolysis of both DNA and RNA at the 5'-position of the phosphodiester bond. In Staphylococcus intermedius, this protein is Thermonuclease (nucI).